Reading from the N-terminus, the 314-residue chain is Olfactory receptor 1C1 (314 aa).

The Extracellular segment spans residues methionine 1 to histidine 25. Residues leucine 26–isoleucine 49 traverse the membrane as a helical segment. Topologically, residues glycine 50–serine 57 are cytoplasmic. A helical transmembrane segment spans residues proline 58–proline 79. Over glutamine 80–glutamine 100 the chain is Extracellular. A disulfide bridge links cysteine 97 with cysteine 189. The helical transmembrane segment at leucine 101 to tyrosine 120 threads the bilayer. Residues aspartate 121 to cysteine 139 are Cytoplasmic-facing. A helical transmembrane segment spans residues leucine 140–leucine 158. Over histidine 159–asparagine 195 the chain is Extracellular. The helical transmembrane segment at valine 196 to glycine 219 threads the bilayer. The Cytoplasmic portion of the chain corresponds to leucine 220–arginine 236. A helical membrane pass occupies residues alanine 237–tyrosine 259. Residues phenylalanine 260–threonine 272 lie on the Extracellular side of the membrane. A helical membrane pass occupies residues leucine 273–leucine 292. The Cytoplasmic portion of the chain corresponds to arginine 293 to glutamine 314.

Belongs to the G-protein coupled receptor 1 family.

It localises to the cell membrane. Functionally, odorant receptor. This Homo sapiens (Human) protein is Olfactory receptor 1C1 (OR1C1).